We begin with the raw amino-acid sequence, 146 residues long: Large-conductance mechanosensitive channel (146 aa).

Transmembrane regions (helical) follow at residues 12 to 32 and 83 to 103; these read AFAM…GGAF and GNFL…FLFI.

The protein belongs to the MscL family. In terms of assembly, homopentamer.

It localises to the cell inner membrane. Channel that opens in response to stretch forces in the membrane lipid bilayer. May participate in the regulation of osmotic pressure changes within the cell. In Phocaeicola vulgatus (strain ATCC 8482 / DSM 1447 / JCM 5826 / CCUG 4940 / NBRC 14291 / NCTC 11154) (Bacteroides vulgatus), this protein is Large-conductance mechanosensitive channel.